Consider the following 147-residue polypeptide: Hemoglobin subunit epsilon (147 aa).

The Globin domain occupies 3–147 (HFTAEEKAII…VATALAHKYH (145 aa)). Ser-14 and Ser-51 each carry phosphoserine. 2 residues coordinate heme b: His-64 and His-93.

This sequence belongs to the globin family. As to quaternary structure, heterotetramer of two alpha chains and two epsilon chains in early embryonic hemoglobin Gower-2; two zeta chains and two epsilon chains in early embryonic hemoglobin Gower-1. Red blood cells.

Functionally, the epsilon chain is a beta-type chain of early mammalian embryonic hemoglobin. In Otolemur crassicaudatus (Brown greater galago), this protein is Hemoglobin subunit epsilon (HBE1).